The sequence spans 269 residues: Small ribosomal subunit protein eS1 (269 aa).

The interval 1–20 is disordered; it reads MAVGKNKGVSKGGKKGSKKK.

Belongs to the eukaryotic ribosomal protein eS1 family. Component of the small ribosomal subunit. Mature ribosomes consist of a small (40S) and a large (60S) subunit. The 40S subunit contains about 33 different proteins and 1 molecule of RNA (18S). The 60S subunit contains about 49 different proteins and 3 molecules of RNA (28S, 5.8S and 5S).

The protein resides in the cytoplasm. Its function is as follows. Has an essential role in oogenesis. The polypeptide is Small ribosomal subunit protein eS1 (Anopheles gambiae (African malaria mosquito)).